Reading from the N-terminus, the 477-residue chain is UDP-N-acetylmuramate--L-alanine ligase (477 aa).

112 to 118 (GTHGKTT) contributes to the ATP binding site.

Belongs to the MurCDEF family.

The protein localises to the cytoplasm. The enzyme catalyses UDP-N-acetyl-alpha-D-muramate + L-alanine + ATP = UDP-N-acetyl-alpha-D-muramoyl-L-alanine + ADP + phosphate + H(+). Its pathway is cell wall biogenesis; peptidoglycan biosynthesis. Its function is as follows. Cell wall formation. This chain is UDP-N-acetylmuramate--L-alanine ligase, found in Verminephrobacter eiseniae (strain EF01-2).